The sequence spans 829 residues: Probable receptor-like protein kinase At5g59700 (829 aa).

The signal sequence occupies residues 1-24 (MGGEKFGFLIWILSIPCLIFLCYG). Residues 25–406 (YVPVDNYLIN…SSTTKKNVGM (382 aa)) lie on the Extracellular side of the membrane. N-linked (GlcNAc...) asparagine glycosylation is found at asparagine 40, asparagine 216, asparagine 279, and asparagine 380. A helical membrane pass occupies residues 407–427 (IIGLTIGSLLALVVLGGFFVL). Residues 428–829 (YKKRGRDQDG…FSQLIKSEGR (402 aa)) are Cytoplasmic-facing. Residues 482 to 755 (FDENRAIGVG…GDVLWNLEYA (274 aa)) form the Protein kinase domain. ATP is bound by residues 488-496 (IGVGGFGKV) and lysine 510. Residue aspartate 606 is the Proton acceptor of the active site.

Belongs to the protein kinase superfamily. Ser/Thr protein kinase family.

It is found in the cell membrane. This is Probable receptor-like protein kinase At5g59700 from Arabidopsis thaliana (Mouse-ear cress).